Reading from the N-terminus, the 390-residue chain is MAIFRDYTNNQIDHDRSIEDRRRHRQLVEKSIKENLGDILSEESIVGESKNKKFKIPIKGIKEYQFVYGKNSKGVASGVGNEKRGEKLGNGNKKLAKGNQGAGNEEGDDIYETEITLEELMDYISEDLNLPNLDQKKYSEIVTETSGKKRGYQTHGIRPRLAKKKTVMSKIARKQGKKRALKELESDEELERFPFREEDLRYYRVKLKPKKDSNAVMLFIMDASGSMDVTKKYLARSYFFVLATFLKRKYNNIAFEFIYHTTVAKRVDEFEFFHKSESGGTYISSGINEALKVIEEKYPPAAWNIYSIYASDGDNWSEDNEKAVAAVKDICEVSNMFGYAELLPSTYTTTMYHKFKKEITNEKFVPVIIKEKKDLWDALKIMLRKELKEE.

The interval 77–108 is disordered; that stretch reads SGVGNEKRGEKLGNGNKKLAKGNQGAGNEEGD. Residues 89–103 show a composition bias toward low complexity; it reads GNGNKKLAKGNQGAG.

Belongs to the UPF0229 family.

The sequence is that of UPF0229 protein Cbei_0567 from Clostridium beijerinckii (strain ATCC 51743 / NCIMB 8052) (Clostridium acetobutylicum).